A 472-amino-acid polypeptide reads, in one-letter code: Trigger factor (472 aa).

The PPIase FKBP-type domain occupies G174 to P261. The segment at E438 to S472 is disordered. Residues K439–K451 show a composition bias toward basic and acidic residues.

Belongs to the FKBP-type PPIase family. Tig subfamily.

It localises to the cytoplasm. It carries out the reaction [protein]-peptidylproline (omega=180) = [protein]-peptidylproline (omega=0). Involved in protein export. Acts as a chaperone by maintaining the newly synthesized protein in an open conformation. Functions as a peptidyl-prolyl cis-trans isomerase. This Prochlorococcus marinus (strain NATL2A) protein is Trigger factor.